The following is a 122-amino-acid chain: Large ribosomal subunit protein uL14 (122 aa).

Belongs to the universal ribosomal protein uL14 family. In terms of assembly, part of the 50S ribosomal subunit. Forms a cluster with proteins L3 and L19. In the 70S ribosome, L14 and L19 interact and together make contacts with the 16S rRNA in bridges B5 and B8.

In terms of biological role, binds to 23S rRNA. Forms part of two intersubunit bridges in the 70S ribosome. The polypeptide is Large ribosomal subunit protein uL14 (Paenarthrobacter aurescens (strain TC1)).